The sequence spans 450 residues: Phosphoglucosamine mutase (450 aa).

S101 (phosphoserine intermediate) is an active-site residue. Mg(2+) is bound by residues S101, D240, D242, and D244. Residue S101 is modified to Phosphoserine.

This sequence belongs to the phosphohexose mutase family. Requires Mg(2+) as cofactor. Post-translationally, activated by phosphorylation.

The catalysed reaction is alpha-D-glucosamine 1-phosphate = D-glucosamine 6-phosphate. Its function is as follows. Catalyzes the conversion of glucosamine-6-phosphate to glucosamine-1-phosphate. The chain is Phosphoglucosamine mutase from Streptococcus pneumoniae (strain Hungary19A-6).